Here is a 207-residue protein sequence, read N- to C-terminus: Cytochrome c biogenesis ATP-binding export protein CcmA (207 aa).

Residues 4–207 (LEARELLCER…RISLTQTGAA (204 aa)) form the ABC transporter domain. ATP is bound at residue 36 to 43 (GSNGAGKT).

This sequence belongs to the ABC transporter superfamily. CcmA exporter (TC 3.A.1.107) family. The complex is composed of two ATP-binding proteins (CcmA) and two transmembrane proteins (CcmB).

It is found in the cell inner membrane. The catalysed reaction is heme b(in) + ATP + H2O = heme b(out) + ADP + phosphate + H(+). Its function is as follows. Part of the ABC transporter complex CcmAB involved in the biogenesis of c-type cytochromes; once thought to export heme, this seems not to be the case, but its exact role is uncertain. Responsible for energy coupling to the transport system. The protein is Cytochrome c biogenesis ATP-binding export protein CcmA of Escherichia coli (strain UTI89 / UPEC).